Consider the following 63-residue polypeptide: Large ribosomal subunit protein uL29 (63 aa).

The protein belongs to the universal ribosomal protein uL29 family.

In Aliivibrio fischeri (strain ATCC 700601 / ES114) (Vibrio fischeri), this protein is Large ribosomal subunit protein uL29.